A 188-amino-acid chain; its full sequence is Elongation factor P-like protein (188 aa).

It belongs to the elongation factor P family.

In Xanthomonas euvesicatoria pv. vesicatoria (strain 85-10) (Xanthomonas campestris pv. vesicatoria), this protein is Elongation factor P-like protein.